A 596-amino-acid chain; its full sequence is A-type ATP synthase subunit A (596 aa).

241-248 (GPFGSGKT) is a binding site for ATP.

The protein belongs to the ATPase alpha/beta chains family. As to quaternary structure, has multiple subunits with at least A(3), B(3), C, D, E, F, H, I and proteolipid K(x).

Its subcellular location is the cell membrane. It catalyses the reaction ATP + H2O + 4 H(+)(in) = ADP + phosphate + 5 H(+)(out). Its function is as follows. Component of the A-type ATP synthase that produces ATP from ADP in the presence of a proton gradient across the membrane. The A chain is the catalytic subunit. In Ignicoccus hospitalis (strain KIN4/I / DSM 18386 / JCM 14125), this protein is A-type ATP synthase subunit A.